The sequence spans 283 residues: Undecaprenyl-diphosphatase (283 aa).

6 helical membrane passes run 47–67 (PGLSVTAVIQLGSIVAVIAYF), 94–114 (LGIAMLIGTLPILIAGLCIKL), 127–147 (VPAIAVVSIVMALLLGFAELL), 197–217 (AARFSFLLGIPAITIAGLVEL), 227–247 (GGVLPVFVGICSAAVVSWLAI), and 261–281 (IFVVYRLLFGVLLLVWWSGSA).

Belongs to the UppP family.

The protein localises to the cell inner membrane. It carries out the reaction di-trans,octa-cis-undecaprenyl diphosphate + H2O = di-trans,octa-cis-undecaprenyl phosphate + phosphate + H(+). Functionally, catalyzes the dephosphorylation of undecaprenyl diphosphate (UPP). Confers resistance to bacitracin. The chain is Undecaprenyl-diphosphatase from Synechococcus sp. (strain CC9311).